A 469-amino-acid polypeptide reads, in one-letter code: ATP-dependent protease ATPase subunit HslU (469 aa).

Residues Ile24, 66–71 (GVGKTE), Asp282, Glu347, and Arg419 each bind ATP.

It belongs to the ClpX chaperone family. HslU subfamily. A double ring-shaped homohexamer of HslV is capped on each side by a ring-shaped HslU homohexamer. The assembly of the HslU/HslV complex is dependent on binding of ATP.

Its subcellular location is the cytoplasm. Functionally, ATPase subunit of a proteasome-like degradation complex; this subunit has chaperone activity. The binding of ATP and its subsequent hydrolysis by HslU are essential for unfolding of protein substrates subsequently hydrolyzed by HslV. HslU recognizes the N-terminal part of its protein substrates and unfolds these before they are guided to HslV for hydrolysis. The polypeptide is ATP-dependent protease ATPase subunit HslU (Listeria monocytogenes serotype 4a (strain HCC23)).